The primary structure comprises 433 residues: Peptidoglycan DD-endopeptidase ShyC (433 aa).

A helical membrane pass occupies residues 10 to 30 (WLHRVLITAFSAIIVFAIFFL). Residues H299, D303, and H380 each coordinate Zn(2+).

The protein belongs to the peptidase M23B family. Requires Zn(2+) as cofactor.

The protein resides in the cell inner membrane. It participates in cell wall degradation; peptidoglycan degradation. Reduced activity in 0.5 mM EDTA and a complete loss of activity at higher EDTA concentrations. Functionally, cell wall peptidoglycan (PG) DD-endopeptidase. Hydrolyzes peptide cross-links which covalently connect adjacent PG strands probably to allow insertion of new glycans and thus cell wall expansion. Degrades purified whole PG sacculi in vitro. The chain is Peptidoglycan DD-endopeptidase ShyC from Vibrio cholerae serotype O1 (strain ATCC 39315 / El Tor Inaba N16961).